The chain runs to 666 residues: DNA mismatch repair protein MutL (666 aa).

The protein belongs to the DNA mismatch repair MutL/HexB family.

Functionally, this protein is involved in the repair of mismatches in DNA. It is required for dam-dependent methyl-directed DNA mismatch repair. May act as a 'molecular matchmaker', a protein that promotes the formation of a stable complex between two or more DNA-binding proteins in an ATP-dependent manner without itself being part of a final effector complex. This chain is DNA mismatch repair protein MutL, found in Clostridium botulinum (strain ATCC 19397 / Type A).